Here is a 283-residue protein sequence, read N- to C-terminus: MTQPTSQAHIAACLIGWPAAHSRSPLIHHYWLRKLGIEGGYSIESVPPEGFAEFVLHLKTHGYSGANVTIPHKERALQLTVPDQRACAVGAANTLYYDGSVLRSTNTDVEGFISNLDASAPGWDRTPHAVVLGAGGSSRAVVFGLLERGIQRIALANRSIERARALADLFGERVVPIAWTDAPAALPGAGLLVNTTSLGMKGQPSLDLDLEPLPADATVADLVYVPLETELLSEARARGLRTADGLGMLLHQAVRGFELWFGARPEVTSELRALVEADLVAHA.

Residues 22–24 and Thr69 each bind shikimate; that span reads SRS. Lys73 functions as the Proton acceptor in the catalytic mechanism. Asn93 and Asp108 together coordinate shikimate. Residues 133–137 and Leu222 contribute to the NADP(+) site; that span reads GAGGS. Position 224 (Tyr224) interacts with shikimate. Gly245 is an NADP(+) binding site.

This sequence belongs to the shikimate dehydrogenase family. Homodimer.

The enzyme catalyses shikimate + NADP(+) = 3-dehydroshikimate + NADPH + H(+). It functions in the pathway metabolic intermediate biosynthesis; chorismate biosynthesis; chorismate from D-erythrose 4-phosphate and phosphoenolpyruvate: step 4/7. In terms of biological role, involved in the biosynthesis of the chorismate, which leads to the biosynthesis of aromatic amino acids. Catalyzes the reversible NADPH linked reduction of 3-dehydroshikimate (DHSA) to yield shikimate (SA). The sequence is that of Shikimate dehydrogenase (NADP(+)) from Rhodopseudomonas palustris (strain BisB5).